A 203-amino-acid polypeptide reads, in one-letter code: Putative archaetidylserine decarboxylase proenzyme (203 aa).

Ser-171 (schiff-base intermediate with substrate; via pyruvic acid) is an active-site residue. Ser-171 carries the post-translational modification Pyruvic acid (Ser); by autocatalysis.

This sequence belongs to the phosphatidylserine decarboxylase family. PSD-A subfamily. In terms of assembly, heterodimer of a large membrane-associated beta subunit and a small pyruvoyl-containing alpha subunit. Pyruvate is required as a cofactor. Is synthesized initially as an inactive proenzyme. Formation of the active enzyme involves a self-maturation process in which the active site pyruvoyl group is generated from an internal serine residue via an autocatalytic post-translational modification. Two non-identical subunits are generated from the proenzyme in this reaction, and the pyruvate is formed at the N-terminus of the alpha chain, which is derived from the carboxyl end of the proenzyme. The post-translation cleavage follows an unusual pathway, termed non-hydrolytic serinolysis, in which the side chain hydroxyl group of the serine supplies its oxygen atom to form the C-terminus of the beta chain, while the remainder of the serine residue undergoes an oxidative deamination to produce ammonia and the pyruvoyl prosthetic group on the alpha chain.

The protein resides in the cell membrane. The catalysed reaction is archaetidylserine + H(+) = archaetidylethanolamine + CO2. Catalyzes the formation of archaetidylethanolamine (PtdEtn) from archaetidylserine (PtdSer). The chain is Putative archaetidylserine decarboxylase proenzyme from Methanosarcina barkeri (strain Fusaro / DSM 804).